The following is a 419-amino-acid chain: MYEPTLTVESFDSELAGAIRDERRRQEHHVELIASENYVSPRVLELQGSVLTNKYAEGYPGRRYYAGCEFVDIAEQLAIDRAKELFGADYANVQPHSGSQANAEAYMALMNPGDTLLAMDLSHGGHLTHGSPVSFSGKFYKAVHYGLNAHGDIDYEQAAQLAQEHKPKVILAGFSAFSGIVDWQRFREIADSVNAYFMTDIAHVAGLVAAGVYPSPVQIADVTTTTTHKTLRGPRAGLILAKANPELEKRLNSAVFPGSQGGPLMHIIAAKAVAFKEAMQPEFKTYAQQILKNAKAMAEVMKERDYTIVSGGTQNHLFLVSLLNKNISGKEAEAALGRANITVNKNTVPGETRSPFVTSGLRIGTPAITTRGFKEKEASQLAHWVCDILDDIHNEKVIADVKQKAHELCGKFPVYQELD.

(6S)-5,6,7,8-tetrahydrofolate contacts are provided by residues leucine 121 and 125 to 127 (GHL). Lysine 229 is modified (N6-(pyridoxal phosphate)lysine). 354-356 (SPF) provides a ligand contact to (6S)-5,6,7,8-tetrahydrofolate.

It belongs to the SHMT family. Homodimer. Pyridoxal 5'-phosphate is required as a cofactor.

It localises to the cytoplasm. The catalysed reaction is (6R)-5,10-methylene-5,6,7,8-tetrahydrofolate + glycine + H2O = (6S)-5,6,7,8-tetrahydrofolate + L-serine. Its pathway is one-carbon metabolism; tetrahydrofolate interconversion. It participates in amino-acid biosynthesis; glycine biosynthesis; glycine from L-serine: step 1/1. Its function is as follows. Catalyzes the reversible interconversion of serine and glycine with tetrahydrofolate (THF) serving as the one-carbon carrier. This reaction serves as the major source of one-carbon groups required for the biosynthesis of purines, thymidylate, methionine, and other important biomolecules. Also exhibits THF-independent aldolase activity toward beta-hydroxyamino acids, producing glycine and aldehydes, via a retro-aldol mechanism. The sequence is that of Serine hydroxymethyltransferase from Coxiella burnetii (strain CbuG_Q212) (Coxiella burnetii (strain Q212)).